We begin with the raw amino-acid sequence, 314 residues long: Glycerol-1-phosphate dehydrogenase [NAD(P)+] (314 aa).

Residues 52 to 56 and 74 to 77 contribute to the NAD(+) site; these read GKPLD and TSAS. D79 is a binding site for substrate. Residue S83 participates in NAD(+) binding. D131 serves as a coordination point for substrate. The Zn(2+) site is built by D131 and H211. H215 serves as a coordination point for substrate. H231 is a binding site for Zn(2+).

The protein belongs to the glycerol-1-phosphate dehydrogenase family. Requires Zn(2+) as cofactor.

It is found in the cytoplasm. The catalysed reaction is sn-glycerol 1-phosphate + NAD(+) = dihydroxyacetone phosphate + NADH + H(+). It carries out the reaction sn-glycerol 1-phosphate + NADP(+) = dihydroxyacetone phosphate + NADPH + H(+). It participates in membrane lipid metabolism; glycerophospholipid metabolism. Functionally, catalyzes the NAD(P)H-dependent reduction of dihydroxyacetonephosphate (DHAP or glycerone phosphate) to glycerol 1-phosphate (G1P). The G1P thus generated is used as the glycerophosphate backbone of phospholipids in the cellular membranes of Archaea. In Korarchaeum cryptofilum (strain OPF8), this protein is Glycerol-1-phosphate dehydrogenase [NAD(P)+].